The primary structure comprises 638 residues: Chaperone protein DnaK (638 aa).

Position 196 is a phosphothreonine; by autocatalysis (threonine 196). Positions 592 to 638 (ASNLYQQPGAEAGAAPQPETNGQQESKGGDGAVNAEYEVIDGDDDKK) are disordered. Residues 597–610 (QQPGAEAGAAPQPE) are compositionally biased toward low complexity. The span at 629–638 (EVIDGDDDKK) shows a compositional bias: acidic residues.

The protein belongs to the heat shock protein 70 family.

Functionally, acts as a chaperone. The protein is Chaperone protein DnaK of Chlorobaculum parvum (strain DSM 263 / NCIMB 8327) (Chlorobium vibrioforme subsp. thiosulfatophilum).